We begin with the raw amino-acid sequence, 367 residues long: MSLADSVLAVNNDLPIRTDKPVHSGKVRSVYWLTDTDSRRLIRDKGYDVPEDTPLAIMVISDRISAFDCIFHGEGDLQGIPGKGAALNAISNHWFGLFAENGLADSHILDIPHPFVWIVQKARPIKVEAICRQYITGSMWRAYSKGERVFCGITLPEGLSKDQKLPELLITPSTKGILTGIPGVPAQDDVNISRSDIEANYQAFGFEKPQDIDLYETLLKQGFKVISDALAKLDQVFVDTKFEFGYVNDKNGQSKLIYMDEVGTPDSSRIWDGAAYREGKIVENSKEGFRQFLLNHFDDADILLNKDRMPEREALARDNDLPLDAMMNVSRTYIGVAEKVTGSSIPLPANPKADIIKVLREQYDLIV.

This sequence belongs to the SAICAR synthetase family.

It carries out the reaction 5-amino-1-(5-phospho-D-ribosyl)imidazole-4-carboxylate + L-aspartate + ATP = (2S)-2-[5-amino-1-(5-phospho-beta-D-ribosyl)imidazole-4-carboxamido]succinate + ADP + phosphate + 2 H(+). It participates in purine metabolism; IMP biosynthesis via de novo pathway; 5-amino-1-(5-phospho-D-ribosyl)imidazole-4-carboxamide from 5-amino-1-(5-phospho-D-ribosyl)imidazole-4-carboxylate: step 1/2. The sequence is that of Phosphoribosylaminoimidazole-succinocarboxamide synthase from Shewanella frigidimarina (strain NCIMB 400).